A 412-amino-acid polypeptide reads, in one-letter code: Divalent metal cation transporter MntH (412 aa).

A run of 11 helical transmembrane segments spans residues 19–39 (FALMGPAFIAAIGYIDPGNFA), 46–66 (ASFGYKLLWVVVWANLMAMLI), 94–114 (VWFYWVQAEIIAMATDLAEFI), 122–142 (LILGVSLLQGAVLTGIATFLI), 155–175 (LVIGGLLLFVAAAYIVELVFS), 196–216 (AVFLAAGVLGATIMPHVIYLH), 241–261 (IAMTIAGFVNLAMMATAAAAF), 290–310 (IFGLSLVAAGLSSTVVGTLAG), 329–349 (SVTMMPSFIVILMGLDPTRIL), 350–370 (VMSQVLLSFGIALALVPLLIF), and 389–409 (IGWMIVVLVVALNLWLLIGTL).

It belongs to the NRAMP family.

The protein resides in the cell inner membrane. In terms of biological role, h(+)-stimulated, divalent metal cation uptake system. The chain is Divalent metal cation transporter MntH from Enterobacter sp. (strain 638).